The following is a 314-amino-acid chain: TPR repeat-containing protein MJ1345 (314 aa).

TPR repeat units follow at residues 12-45, 46-78, 80-112, 114-146, 147-180, 182-214, 215-248, 249-282, and 284-313; these read ESIL…RESP, DVYV…KPKY, LANF…EKSD, PVKY…YPKS, AIAW…NPKD, QSLL…NNKD, IRAL…NPDD, PLLY…NPNI, and DAWN…LDIY.

In Methanocaldococcus jannaschii (strain ATCC 43067 / DSM 2661 / JAL-1 / JCM 10045 / NBRC 100440) (Methanococcus jannaschii), this protein is TPR repeat-containing protein MJ1345.